Here is an 833-residue protein sequence, read N- to C-terminus: RNA-binding protein 5-A (833 aa).

The tract at residues 1–87 (MGSDKRVSRS…GYHSDGDYMD (87 aa)) is disordered. Positions 102–182 (KTIMLRGLPI…KTIAMHYSNP (81 aa)) constitute an RRM 1 domain. A RanBP2-type zinc finger spans residues 185 to 214 (KFEDWLCNKCGLYNFRRRLKCFRCGAAKAE). The region spanning 241-325 (SAIILRNIGP…KTIGVDFAKS (85 aa)) is the RRM 2 domain. Residues 396 to 428 (TGAAEQGTAPQAESSSPVPATTSAVVCQSPQMY) show a composition bias toward polar residues. Disordered regions lie at residues 396-458 (TGAA…EEAA) and 523-559 (AADG…TAQQ). Low complexity predominate over residues 429–458 (QQPGSPTQSSTSTVAASATPASGTSAEEAA). The segment at 667–692 (LACLLCRRQFPNKDALTRHQQLSDLH) adopts a C2H2-type zinc-finger fold. The region spanning 761–807 (NSNIGNKMLQAMGWKEGSGLGRKSQGITAPIQAQVRMRGAGLGAKGS) is the G-patch domain.

This sequence belongs to the RBM5/RBM10 family. In terms of assembly, component of the spliceosome A complex (also known as the prespliceosome). Appears to dissociate from the spliceosome upon formation of the spliceosome B complex (also known as the precatalytic spliceosome), in which the heterotrimeric U4/U6.U5 snRNPs are bound.

The protein resides in the nucleus. Its function is as follows. Component of the spliceosome A complex. Regulates alternative splicing of a number of mRNAs. May modulate splice site pairing after recruitment of the U1 and U2 snRNPs to the 5' and 3' splice sites of the intron. The protein is RNA-binding protein 5-A (rbm5-a) of Xenopus laevis (African clawed frog).